We begin with the raw amino-acid sequence, 596 residues long: Aspartate--tRNA(Asp/Asn) ligase (596 aa).

E172 contacts L-aspartate. Residues 196–199 form an aspartate region; the sequence is QLFK. L-aspartate is bound at residue R218. ATP contacts are provided by residues 218–220 and Q227; that span reads RDE. H455 contributes to the L-aspartate binding site. E489 lines the ATP pocket. R496 is a binding site for L-aspartate. Residue 541-544 coordinates ATP; the sequence is GLDR.

It belongs to the class-II aminoacyl-tRNA synthetase family. Type 1 subfamily. In terms of assembly, homodimer.

The protein resides in the cytoplasm. It carries out the reaction tRNA(Asx) + L-aspartate + ATP = L-aspartyl-tRNA(Asx) + AMP + diphosphate. Functionally, aspartyl-tRNA synthetase with relaxed tRNA specificity since it is able to aspartylate not only its cognate tRNA(Asp) but also tRNA(Asn). Reaction proceeds in two steps: L-aspartate is first activated by ATP to form Asp-AMP and then transferred to the acceptor end of tRNA(Asp/Asn). In Bordetella bronchiseptica (strain ATCC BAA-588 / NCTC 13252 / RB50) (Alcaligenes bronchisepticus), this protein is Aspartate--tRNA(Asp/Asn) ligase.